A 182-amino-acid polypeptide reads, in one-letter code: Ribosome maturation factor RimM (182 aa).

One can recognise a PRC barrel domain in the interval 101 to 182 (VDEYYWSDLK…RIYVNWGVDY (82 aa)).

It belongs to the RimM family. Binds ribosomal protein uS19.

The protein resides in the cytoplasm. Its function is as follows. An accessory protein needed during the final step in the assembly of 30S ribosomal subunit, possibly for assembly of the head region. Essential for efficient processing of 16S rRNA. May be needed both before and after RbfA during the maturation of 16S rRNA. It has affinity for free ribosomal 30S subunits but not for 70S ribosomes. The protein is Ribosome maturation factor RimM of Acinetobacter baylyi (strain ATCC 33305 / BD413 / ADP1).